A 166-amino-acid chain; its full sequence is Small ribosomal subunit protein uS5 (166 aa).

One can recognise an S5 DRBM domain in the interval 11–74; it reads LIEKLITVNR…EKARRNMVTV (64 aa).

The protein belongs to the universal ribosomal protein uS5 family. As to quaternary structure, part of the 30S ribosomal subunit. Contacts proteins S4 and S8.

Functionally, with S4 and S12 plays an important role in translational accuracy. Its function is as follows. Located at the back of the 30S subunit body where it stabilizes the conformation of the head with respect to the body. The chain is Small ribosomal subunit protein uS5 from Idiomarina loihiensis (strain ATCC BAA-735 / DSM 15497 / L2-TR).